The primary structure comprises 281 residues: Shikimate dehydrogenase (NADP(+)) (281 aa).

Residues 20-22 (SRS) and threonine 67 each bind shikimate. The active-site Proton acceptor is the lysine 71. Position 83 (aspartate 83) interacts with NADP(+). 2 residues coordinate shikimate: asparagine 92 and aspartate 108. NADP(+) is bound by residues 133–137 (GAGGA), 157–162 (NRTEAR), and methionine 225. Residue tyrosine 227 participates in shikimate binding. Position 248 (glycine 248) interacts with NADP(+).

Belongs to the shikimate dehydrogenase family. As to quaternary structure, homodimer.

It catalyses the reaction shikimate + NADP(+) = 3-dehydroshikimate + NADPH + H(+). Its pathway is metabolic intermediate biosynthesis; chorismate biosynthesis; chorismate from D-erythrose 4-phosphate and phosphoenolpyruvate: step 4/7. Functionally, involved in the biosynthesis of the chorismate, which leads to the biosynthesis of aromatic amino acids. Catalyzes the reversible NADPH linked reduction of 3-dehydroshikimate (DHSA) to yield shikimate (SA). The chain is Shikimate dehydrogenase (NADP(+)) from Paracidovorax citrulli (strain AAC00-1) (Acidovorax citrulli).